A 314-amino-acid polypeptide reads, in one-letter code: Homoserine kinase (314 aa).

96–106 is an ATP binding site; that stretch reads PIGSGLGSSAC.

This sequence belongs to the GHMP kinase family. Homoserine kinase subfamily.

The protein localises to the cytoplasm. The enzyme catalyses L-homoserine + ATP = O-phospho-L-homoserine + ADP + H(+). Its pathway is amino-acid biosynthesis; L-threonine biosynthesis; L-threonine from L-aspartate: step 4/5. Catalyzes the ATP-dependent phosphorylation of L-homoserine to L-homoserine phosphate. The sequence is that of Homoserine kinase from Haemophilus influenzae (strain PittEE).